Here is a 744-residue protein sequence, read N- to C-terminus: Cell surface receptor daf-4 (744 aa).

The signal sequence occupies residues 1–31 (MNQKGTVRLKALVLICLPLFLIATPVPVAVT). The Extracellular portion of the chain corresponds to 48–253 (WANTLVSKVA…IALLILAYVG (206 aa)). N-linked (GlcNAc...) asparagine glycans are attached at residues Asn60, Asn134, and Asn165. The chain crosses the membrane as a helical span at residues 254–274 (WKFQQNKKEEIKKQQKIKFDM). Topologically, residues 275-744 (EKTDALEAGN…PSGTFGTFTT (470 aa)) are cytoplasmic. Residues 306–603 (ITDFQLISKG…FARVWNHIMS (298 aa)) form the Protein kinase domain. Residues 312-320 (ISKGRFGKV) and Lys338 each bind ATP. The Proton acceptor role is filled by Asp440. 2 disordered regions span residues 605–686 (PDSS…PEPE) and 724–744 (AGAD…TFTT). Residues 620-639 (RGVDDVEQSEKPEGIEEMQH) are compositionally biased toward basic and acidic residues. A compositionally biased stretch (low complexity) spans 731–744 (STPTPSGTFGTFTT).

Belongs to the protein kinase superfamily. TKL Ser/Thr protein kinase family. TGFB receptor subfamily. In terms of assembly, may interact with daf-1 to regulate dauer larva development. Interacts with sma-10. As to expression, pharynx, intestine, hypodermis and body wall muscles in L1 through to adult stages. Also expressed in head neurons, ventral cord and tail neurons. Subset of head neurons show coexpression with daf-1 when dauer/nondauer decision is made.

It localises to the cell membrane. The catalysed reaction is L-threonyl-[receptor-protein] + ATP = O-phospho-L-threonyl-[receptor-protein] + ADP + H(+). It catalyses the reaction L-seryl-[receptor-protein] + ATP = O-phospho-L-seryl-[receptor-protein] + ADP + H(+). Its function is as follows. Involved in a TGF-beta pathway. May be a receptor for TGF-beta-like ligand daf-7. Controls the decision of whether or not larvae enter a developmentally arrested state, known as dauer, in response to environmental conditions. Regulates body size and male tail patterning. Involved in regulating entry into quiescence triggered by satiety. Involved in sensitivity to CO2 levels. In Caenorhabditis elegans, this protein is Cell surface receptor daf-4.